The following is a 419-amino-acid chain: UPF0242 protein TC_0906 (419 aa).

It belongs to the UPF0242 family.

The sequence is that of UPF0242 protein TC_0906 from Chlamydia muridarum (strain MoPn / Nigg).